Reading from the N-terminus, the 336-residue chain is tRNA N6-adenosine threonylcarbamoyltransferase (336 aa).

The Fe cation site is built by His112 and His116. Residues 136-140, Asp169, Gly182, and Asn276 each bind substrate; that span reads LVSGG. Asp304 provides a ligand contact to Fe cation.

This sequence belongs to the KAE1 / TsaD family. The cofactor is Fe(2+).

The protein resides in the cytoplasm. It carries out the reaction L-threonylcarbamoyladenylate + adenosine(37) in tRNA = N(6)-L-threonylcarbamoyladenosine(37) in tRNA + AMP + H(+). In terms of biological role, required for the formation of a threonylcarbamoyl group on adenosine at position 37 (t(6)A37) in tRNAs that read codons beginning with adenine. Is involved in the transfer of the threonylcarbamoyl moiety of threonylcarbamoyl-AMP (TC-AMP) to the N6 group of A37, together with TsaE and TsaB. TsaD likely plays a direct catalytic role in this reaction. The polypeptide is tRNA N6-adenosine threonylcarbamoyltransferase (Francisella tularensis subsp. holarctica (strain FTNF002-00 / FTA)).